Here is a 660-residue protein sequence, read N- to C-terminus: Methionine--tRNA ligase (660 aa).

Residues 15–25 carry the 'HIGH' region motif; that stretch reads YYPSDKLHIGH. The 'KMSKS' region signature appears at 311–315; that stretch reads KMSKS. ATP is bound at residue Lys-314. The segment at 535–554 is disordered; sequence LMGGSKKPEEAPKDEKEESD. Over residues 540 to 550 the composition is skewed to basic and acidic residues; it reads KKPEEAPKDEK. In terms of domain architecture, tRNA-binding spans 560–660; that stretch reads DFSKVELRIA…GALPNGSLVK (101 aa).

Belongs to the class-I aminoacyl-tRNA synthetase family. MetG type 2B subfamily. As to quaternary structure, homodimer.

Its subcellular location is the cytoplasm. The catalysed reaction is tRNA(Met) + L-methionine + ATP = L-methionyl-tRNA(Met) + AMP + diphosphate. Functionally, is required not only for elongation of protein synthesis but also for the initiation of all mRNA translation through initiator tRNA(fMet) aminoacylation. This Halalkalibacterium halodurans (strain ATCC BAA-125 / DSM 18197 / FERM 7344 / JCM 9153 / C-125) (Bacillus halodurans) protein is Methionine--tRNA ligase (metG).